We begin with the raw amino-acid sequence, 266 residues long: Tryptophan synthase alpha chain (266 aa).

Active-site proton acceptor residues include E49 and D60.

It belongs to the TrpA family. Tetramer of two alpha and two beta chains.

It catalyses the reaction (1S,2R)-1-C-(indol-3-yl)glycerol 3-phosphate + L-serine = D-glyceraldehyde 3-phosphate + L-tryptophan + H2O. It participates in amino-acid biosynthesis; L-tryptophan biosynthesis; L-tryptophan from chorismate: step 5/5. In terms of biological role, the alpha subunit is responsible for the aldol cleavage of indoleglycerol phosphate to indole and glyceraldehyde 3-phosphate. This is Tryptophan synthase alpha chain from Trichormus variabilis (strain ATCC 29413 / PCC 7937) (Anabaena variabilis).